The sequence spans 249 residues: 2,3-bisphosphoglycerate-dependent phosphoglycerate mutase (249 aa).

Substrate contacts are provided by residues 8–15, 21–22, Arg60, 87–90, Lys98, 114–115, and 183–184; these read RHGESTWN, TG, ERHY, RR, and GN. His9 functions as the Tele-phosphohistidine intermediate in the catalytic mechanism. Glu87 acts as the Proton donor/acceptor in catalysis.

The protein belongs to the phosphoglycerate mutase family. BPG-dependent PGAM subfamily. In terms of assembly, homodimer.

The catalysed reaction is (2R)-2-phosphoglycerate = (2R)-3-phosphoglycerate. It participates in carbohydrate degradation; glycolysis; pyruvate from D-glyceraldehyde 3-phosphate: step 3/5. Its function is as follows. Catalyzes the interconversion of 2-phosphoglycerate and 3-phosphoglycerate. This Burkholderia mallei (strain NCTC 10247) protein is 2,3-bisphosphoglycerate-dependent phosphoglycerate mutase.